The following is a 250-amino-acid chain: Ribosomal RNA small subunit methyltransferase J (250 aa).

Residues 96 to 97 (RD) and Asp168 contribute to the S-adenosyl-L-methionine site.

This sequence belongs to the methyltransferase superfamily. RsmJ family.

It is found in the cytoplasm. It catalyses the reaction guanosine(1516) in 16S rRNA + S-adenosyl-L-methionine = N(2)-methylguanosine(1516) in 16S rRNA + S-adenosyl-L-homocysteine + H(+). Its function is as follows. Specifically methylates the guanosine in position 1516 of 16S rRNA. This chain is Ribosomal RNA small subunit methyltransferase J, found in Neisseria meningitidis serogroup C (strain 053442).